We begin with the raw amino-acid sequence, 335 residues long: Heat-inducible transcription repressor HrcA (335 aa).

Belongs to the HrcA family.

In terms of biological role, negative regulator of class I heat shock genes (grpE-dnaK-dnaJ and groELS operons). Prevents heat-shock induction of these operons. The chain is Heat-inducible transcription repressor HrcA from Mesomycoplasma hyopneumoniae (strain 232) (Mycoplasma hyopneumoniae).